Here is a 129-residue protein sequence, read N- to C-terminus: Small ribosomal subunit protein uS11 (129 aa).

The protein belongs to the universal ribosomal protein uS11 family. Part of the 30S ribosomal subunit. Interacts with proteins S7 and S18. Binds to IF-3.

Functionally, located on the platform of the 30S subunit, it bridges several disparate RNA helices of the 16S rRNA. Forms part of the Shine-Dalgarno cleft in the 70S ribosome. The protein is Small ribosomal subunit protein uS11 of Francisella tularensis subsp. holarctica (strain FTNF002-00 / FTA).